Reading from the N-terminus, the 397-residue chain is Metallophosphoesterase 1 (397 aa).

Residues 27–47 traverse the membrane as a helical segment; sequence IAVVFAVLLFCEFLIYYLAIF. The a divalent metal cation site is built by Asp-77, Asp-119, Asn-157, His-250, His-304, and His-306. Residues 357 to 377 traverse the membrane as a helical segment; the sequence is VVLIIYCGMVGFLVVLTLTHF. The short motif at 393–397 is the Di-lysine motif element; it reads KRKTR.

It belongs to the metallophosphoesterase superfamily. MPPE1 family. As to quaternary structure, interacts with GPI-anchor proteins (via the GPI portion). Interacts with TMED10. The cofactor is Mn(2+).

Its subcellular location is the endoplasmic reticulum-Golgi intermediate compartment membrane. Metallophosphoesterase that catalyzes the removal of a side-chain ethanolamine-phosphate (EtNP) from the second mannose of the GPI-anchor protein intermediate. Participates in the glycan remodeling steps of GPI-anchor maturation to allow an efficient transport of GPI-anchor proteins from the endoplasmic reticulum to the Golgi. This chain is Metallophosphoesterase 1, found in Pongo abelii (Sumatran orangutan).